Consider the following 567-residue polypeptide: Cytochrome P450 monooxygenase 231 (567 aa).

Residues 3-23 traverse the membrane as a helical segment; it reads VSTNELAILAIVLLATGVLFY. N-linked (GlcNAc...) asparagine glycans are attached at residues N81 and N223. C475 is a heme binding site.

Belongs to the cytochrome P450 family. The cofactor is heme.

The protein localises to the membrane. The protein operates within secondary metabolite biosynthesis. In terms of biological role, cytochrome P450 monooxygenase that is able to use anthracene, carbazole, pyrene, and phenanthrene as substrates for oxidation. These multifunctional properties against a series of polycyclic aromatic hydrocarbons (PAHs) suggest that CYP231 would play important roles, at least in part, in fungal metabolic systems involved in xenobiotic detoxification. This is Cytochrome P450 monooxygenase 231 from Postia placenta (strain ATCC 44394 / Madison 698-R) (Brown rot fungus).